The following is a 442-amino-acid chain: tRNA modification GTPase MnmE (442 aa).

(6S)-5-formyl-5,6,7,8-tetrahydrofolate contacts are provided by Arg27, Glu84, and Lys124. Residues 221–366 enclose the TrmE-type G domain; that stretch reads GLHVVIVGAP…LLDALQAFAE (146 aa). GTP is bound by residues 231 to 236, 250 to 256, and 275 to 278; these read NAGKSS, SEEAGTT, and DTAG. 2 residues coordinate Mg(2+): Ser235 and Thr256. Residue Lys442 participates in (6S)-5-formyl-5,6,7,8-tetrahydrofolate binding.

It belongs to the TRAFAC class TrmE-Era-EngA-EngB-Septin-like GTPase superfamily. TrmE GTPase family. Homodimer. Heterotetramer of two MnmE and two MnmG subunits. The cofactor is K(+).

It localises to the cytoplasm. Functionally, exhibits a very high intrinsic GTPase hydrolysis rate. Involved in the addition of a carboxymethylaminomethyl (cmnm) group at the wobble position (U34) of certain tRNAs, forming tRNA-cmnm(5)s(2)U34. This chain is tRNA modification GTPase MnmE, found in Brucella melitensis biotype 1 (strain ATCC 23456 / CCUG 17765 / NCTC 10094 / 16M).